The sequence spans 912 residues: Protein translocase subunit SecA (912 aa).

ATP contacts are provided by residues Q87, 105 to 109 (GEGKT), and D508. Residues 855 to 912 (QHQDAGGYGADEEVEQMQGGNAPVPVSQVTRDEPKVGRNDPCPCGSGKKYKHCHGQLS) form a disordered region. 4 residues coordinate Zn(2+): C896, C898, C907, and H908. Basic residues predominate over residues 902–912 (KKYKHCHGQLS).

It belongs to the SecA family. Monomer and homodimer. Part of the essential Sec protein translocation apparatus which comprises SecA, SecYEG and auxiliary proteins SecDF-YajC and YidC. The cofactor is Zn(2+).

The protein localises to the cell inner membrane. Its subcellular location is the cytoplasm. It carries out the reaction ATP + H2O + cellular proteinSide 1 = ADP + phosphate + cellular proteinSide 2.. Part of the Sec protein translocase complex. Interacts with the SecYEG preprotein conducting channel. Has a central role in coupling the hydrolysis of ATP to the transfer of proteins into and across the cell membrane, serving both as a receptor for the preprotein-SecB complex and as an ATP-driven molecular motor driving the stepwise translocation of polypeptide chains across the membrane. This is Protein translocase subunit SecA from Xanthomonas campestris pv. campestris (strain 8004).